A 159-amino-acid polypeptide reads, in one-letter code: uncharacterized protein (159 aa).

This is an uncharacterized protein from Acanthamoeba polyphaga (Amoeba).